The chain runs to 383 residues: Protein delta homolog 2 (383 aa).

The signal sequence occupies residues 1–26 (MPSGCRCLHLVCLLCILGAPGQPVRA). EGF-like domains lie at 27-58 (DDCS…LHCE), 62-89 (RMPG…KFCD), 91-129 (DEHI…RDCE), and 131-172 (KAGP…ARCE). Residues 27-306 (DDCSSHCDLA…RQEAGLGEPS (280 aa)) lie on the Extracellular side of the membrane. 17 disulfides stabilise this stretch: C29–C40, C33–C46, C48–C57, C66–C71, C79–C88, C95–C107, C101–C117, C119–C128, C135–C148, C142–C160, C162–C171, C178–C189, C183–C198, C200–C209, C216–C227, C221–C236, and C238–C247. An N-linked (GlcNAc...) asparagine glycan is attached at N157. In terms of domain architecture, EGF-like 5; calcium-binding spans 174 to 210 (NVDDCLMRPCANGATCLDGINRFSCLCPEGFAGRFCT). The EGF-like 6; calcium-binding domain maps to 212 to 248 (NLDDCASRPCQRGARCRDRVHDFDCLCPSGYGGKTCE). A helical membrane pass occupies residues 307–327 (LVALVVFGALTAALVLATVLL). The Cytoplasmic segment spans residues 328-383 (TLRAWRRGVCPPGPCCYPAPHYAPACQDQECQVSMLPAGLPLPRDLPPEPGKTTAL).

It is found in the membrane. Regulates adipogenesis. This Homo sapiens (Human) protein is Protein delta homolog 2 (DLK2).